The sequence spans 664 residues: Glycine--tRNA ligase beta subunit (664 aa).

This sequence belongs to the class-II aminoacyl-tRNA synthetase family. In terms of assembly, tetramer of two alpha and two beta subunits.

Its subcellular location is the cytoplasm. It catalyses the reaction tRNA(Gly) + glycine + ATP = glycyl-tRNA(Gly) + AMP + diphosphate. The polypeptide is Glycine--tRNA ligase beta subunit (Rickettsia felis (strain ATCC VR-1525 / URRWXCal2) (Rickettsia azadi)).